The primary structure comprises 394 residues: G2/mitotic-specific cyclin-B (394 aa).

The interval 360-394 is disordered; the sequence is QSHPSPNSRLDQEEDMASSKFMSDQQATQELKSIR. Residues 379–394 are compositionally biased toward polar residues; that stretch reads KFMSDQQATQELKSIR.

The protein belongs to the cyclin family. Cyclin AB subfamily. Interacts with the CDK1 protein kinase to form a serine/threonine kinase holoenzyme complex also known as maturation promoting factor (MPF). The cyclin subunit imparts substrate specificity to the complex.

Its function is as follows. Essential for the control of the cell cycle at the G2/M (mitosis) transition. The sequence is that of G2/mitotic-specific cyclin-B from Patiria pectinifera (Starfish).